The sequence spans 105 residues: uncharacterized protein (105 aa).

The chain crosses the membrane as a helical span at residues 64-84 (ILLISIFFLLLFALPQHTMGI).

The protein localises to the membrane. This is an uncharacterized protein from Saccharomyces cerevisiae (strain ATCC 204508 / S288c) (Baker's yeast).